A 385-amino-acid chain; its full sequence is Signal transduction histidine-protein kinase/phosphatase DegS (385 aa).

Positions 31-141 (QIGEQSRQQY…IERSESLVSQ (111 aa)) form a coiled coil. The residue at position 76 (Ser76) is a Phosphoserine. Residues 183 to 385 (RVSREIHDGP…FIMIKVPLSL (203 aa)) form the Histidine kinase domain. At His189 the chain carries Phosphohistidine; by autocatalysis.

In terms of processing, autophosphorylated. Phosphorylated in vitro at Ser-76 by the serine/threonine-protein kinase YbdM, which stimulates the phosphate transfer to DegU.

The protein localises to the cytoplasm. It carries out the reaction ATP + protein L-histidine = ADP + protein N-phospho-L-histidine.. Regulated via serine phosphorylation of its input domain. Phosphotransfer from DegS to DegU is stimulated by phosphorylation on Ser-76 and by DegQ. In terms of biological role, member of the two-component regulatory system DegS/DegU, which plays an important role in the transition growth phase. Involved in the control of expression of different cellular functions, including production of degradative enzymes such as the neutral and alkaline proteases, flagellum formation and biofilm formation. Acts both as a protein kinase that undergoes autophosphorylation and subsequently transfers the phosphate to DegU, and as a protein phosphatase that dephosphorylates phospho-DegU. The chain is Signal transduction histidine-protein kinase/phosphatase DegS (degS) from Bacillus subtilis (strain 168).